The sequence spans 379 residues: Arginine biosynthesis bifunctional protein ArgJ (379 aa).

Substrate is bound by residues threonine 140, lysine 160, threonine 171, glutamate 249, asparagine 374, and threonine 379. Threonine 171 serves as the catalytic Nucleophile.

This sequence belongs to the ArgJ family. Heterotetramer of two alpha and two beta chains.

It localises to the cytoplasm. It carries out the reaction N(2)-acetyl-L-ornithine + L-glutamate = N-acetyl-L-glutamate + L-ornithine. The enzyme catalyses L-glutamate + acetyl-CoA = N-acetyl-L-glutamate + CoA + H(+). It functions in the pathway amino-acid biosynthesis; L-arginine biosynthesis; L-ornithine and N-acetyl-L-glutamate from L-glutamate and N(2)-acetyl-L-ornithine (cyclic): step 1/1. Its pathway is amino-acid biosynthesis; L-arginine biosynthesis; N(2)-acetyl-L-ornithine from L-glutamate: step 1/4. Functionally, catalyzes two activities which are involved in the cyclic version of arginine biosynthesis: the synthesis of N-acetylglutamate from glutamate and acetyl-CoA as the acetyl donor, and of ornithine by transacetylation between N(2)-acetylornithine and glutamate. In Archaeoglobus fulgidus (strain ATCC 49558 / DSM 4304 / JCM 9628 / NBRC 100126 / VC-16), this protein is Arginine biosynthesis bifunctional protein ArgJ.